The chain runs to 62 residues: MARKCYITGRQAKSGNKRSHAMNKTKRRWGANVQKVRILVDGKPKRVYVSARALKSGKVERV.

It belongs to the bacterial ribosomal protein bL28 family.

This chain is Large ribosomal subunit protein bL28, found in Halalkalibacterium halodurans (strain ATCC BAA-125 / DSM 18197 / FERM 7344 / JCM 9153 / C-125) (Bacillus halodurans).